The sequence spans 466 residues: Asparagine--tRNA ligase (466 aa).

This sequence belongs to the class-II aminoacyl-tRNA synthetase family. In terms of assembly, homodimer.

The protein localises to the cytoplasm. It catalyses the reaction tRNA(Asn) + L-asparagine + ATP = L-asparaginyl-tRNA(Asn) + AMP + diphosphate + H(+). The polypeptide is Asparagine--tRNA ligase (Klebsiella pneumoniae subsp. pneumoniae (strain ATCC 700721 / MGH 78578)).